Reading from the N-terminus, the 635-residue chain is Threonine--tRNA ligase (635 aa).

Residues 1 to 61 (MINISFPDGS…ENDCKLRILT (61 aa)) enclose the TGS domain. Residues 242–533 (DHRKLGKELD…LIEEYAGCFP (292 aa)) form a catalytic region. The Zn(2+) site is built by C333, H384, and H510.

It belongs to the class-II aminoacyl-tRNA synthetase family. Homodimer. Zn(2+) is required as a cofactor.

The protein resides in the cytoplasm. The enzyme catalyses tRNA(Thr) + L-threonine + ATP = L-threonyl-tRNA(Thr) + AMP + diphosphate + H(+). In terms of biological role, catalyzes the attachment of threonine to tRNA(Thr) in a two-step reaction: L-threonine is first activated by ATP to form Thr-AMP and then transferred to the acceptor end of tRNA(Thr). Also edits incorrectly charged L-seryl-tRNA(Thr). This Rickettsia akari (strain Hartford) protein is Threonine--tRNA ligase.